The chain runs to 245 residues: Octanoyltransferase (245 aa).

The 189-residue stretch at 54–242 (QNAPEQVWLL…AFEQIFGPTI (189 aa)) folds into the BPL/LPL catalytic domain. Residues 93–100 (RGGEFTYH), 173–175 (AIG), and 186–188 (GVS) each bind substrate. Cysteine 204 serves as the catalytic Acyl-thioester intermediate.

The protein belongs to the LipB family.

It localises to the cytoplasm. It carries out the reaction octanoyl-[ACP] + L-lysyl-[protein] = N(6)-octanoyl-L-lysyl-[protein] + holo-[ACP] + H(+). Its pathway is protein modification; protein lipoylation via endogenous pathway; protein N(6)-(lipoyl)lysine from octanoyl-[acyl-carrier-protein]: step 1/2. In terms of biological role, catalyzes the transfer of endogenously produced octanoic acid from octanoyl-acyl-carrier-protein onto the lipoyl domains of lipoate-dependent enzymes. Lipoyl-ACP can also act as a substrate although octanoyl-ACP is likely to be the physiological substrate. In Bartonella quintana (strain Toulouse) (Rochalimaea quintana), this protein is Octanoyltransferase.